The following is a 377-amino-acid chain: DAR GTPase 2, mitochondrial (377 aa).

The N-terminal 21 residues, 1 to 21 (MATAKTWKIAREIGDAVIKAS), are a transit peptide targeting the mitochondrion. The region spanning 34–211 (AAAVRAISER…VLDTPGIFPP (178 aa)) is the CP-type G domain. The short motif at 55–59 (DARIP) is the DARXP motif element. Residues 82-85 (NKME), 110-111 (NS), 150-155 (NVGKSA), and glycine 207 contribute to the GTP site.

It belongs to the TRAFAC class YlqF/YawG GTPase family. MTG1 subfamily.

It is found in the mitochondrion. Functionally, GTPase that may function in mitochondrial ribosome assembly. This Arabidopsis thaliana (Mouse-ear cress) protein is DAR GTPase 2, mitochondrial.